A 761-amino-acid polypeptide reads, in one-letter code: Phosphoribosylformylglycinamidine synthase subunit PurL (761 aa).

Over residues 1 to 13 (MTSRVDTVDNAAS) the composition is skewed to polar residues. The tract at residues 1 to 23 (MTSRVDTVDNAASTPDHPQPFAE) is disordered. The active site involves His57. Residues Tyr60 and Lys104 each coordinate ATP. Glu106 contacts Mg(2+). Substrate is bound by residues 107–110 (SHNH) and Arg129. Residue His108 is the Proton acceptor of the active site. Asp130 lines the Mg(2+) pocket. Gln259 lines the substrate pocket. Asp287 provides a ligand contact to Mg(2+). A substrate-binding site is contributed by 331–333 (ESQ). ATP-binding residues include Asn519 and Gly556. Asn557 serves as a coordination point for Mg(2+). A substrate-binding site is contributed by Ser559.

This sequence belongs to the FGAMS family. In terms of assembly, monomer. Part of the FGAM synthase complex composed of 1 PurL, 1 PurQ and 2 PurS subunits.

It localises to the cytoplasm. The enzyme catalyses N(2)-formyl-N(1)-(5-phospho-beta-D-ribosyl)glycinamide + L-glutamine + ATP + H2O = 2-formamido-N(1)-(5-O-phospho-beta-D-ribosyl)acetamidine + L-glutamate + ADP + phosphate + H(+). The protein operates within purine metabolism; IMP biosynthesis via de novo pathway; 5-amino-1-(5-phospho-D-ribosyl)imidazole from N(2)-formyl-N(1)-(5-phospho-D-ribosyl)glycinamide: step 1/2. Its function is as follows. Part of the phosphoribosylformylglycinamidine synthase complex involved in the purines biosynthetic pathway. Catalyzes the ATP-dependent conversion of formylglycinamide ribonucleotide (FGAR) and glutamine to yield formylglycinamidine ribonucleotide (FGAM) and glutamate. The FGAM synthase complex is composed of three subunits. PurQ produces an ammonia molecule by converting glutamine to glutamate. PurL transfers the ammonia molecule to FGAR to form FGAM in an ATP-dependent manner. PurS interacts with PurQ and PurL and is thought to assist in the transfer of the ammonia molecule from PurQ to PurL. In Mycobacteroides abscessus (strain ATCC 19977 / DSM 44196 / CCUG 20993 / CIP 104536 / JCM 13569 / NCTC 13031 / TMC 1543 / L948) (Mycobacterium abscessus), this protein is Phosphoribosylformylglycinamidine synthase subunit PurL.